A 330-amino-acid polypeptide reads, in one-letter code: Daunorubicin/doxorubicin resistance ATP-binding protein DrrA (330 aa).

An ABC transporter domain is found at 9–239 (IETSGLVKVY…LGSNVLRLRL (231 aa)). ATP is bound at residue 41–48 (GPNGAGKS).

It belongs to the ABC transporter superfamily. Drug exporter-1 (DrugE1) (TC 3.A.1.105) family. As to quaternary structure, the complex is composed of two ATP-binding proteins (DrrA) and two transmembrane proteins (DrrB).

It localises to the cell membrane. It catalyses the reaction daunorubicin(in) + ATP + H2O = daunorubicin(out) + ADP + phosphate + H(+). In terms of biological role, part of the ABC transporter complex DrrAB involved in daunorubicin and doxorubicin resistance. Responsible for energy coupling to the transport system. Binds ATP or GTP. This Streptomyces peucetius protein is Daunorubicin/doxorubicin resistance ATP-binding protein DrrA (drrA).